The chain runs to 1188 residues: Probable phosphoenolpyruvate synthase (1188 aa).

Residues 536–670 (LGGAVLSDGH…LIVGLYRLGI (135 aa)) enclose the DOD-type homing endonuclease domain. His-824 functions as the Tele-phosphohistidine intermediate in the catalytic mechanism. Residues Arg-917, Arg-964, Glu-1061, Gly-1083, Thr-1084, Asn-1085, and Asp-1086 each coordinate substrate. A Mg(2+)-binding site is contributed by Glu-1061. Position 1086 (Asp-1086) interacts with Mg(2+). Cys-1133 functions as the Proton donor in the catalytic mechanism.

Belongs to the PEP-utilizing enzyme family. Requires Mg(2+) as cofactor. Post-translationally, this protein undergoes a protein self splicing that involves a post-translational excision of the intervening region (intein) followed by peptide ligation.

It catalyses the reaction pyruvate + ATP + H2O = phosphoenolpyruvate + AMP + phosphate + 2 H(+). It participates in carbohydrate biosynthesis; gluconeogenesis. Its function is as follows. Catalyzes the phosphorylation of pyruvate to phosphoenolpyruvate. The chain is Probable phosphoenolpyruvate synthase (ppsA) from Methanocaldococcus jannaschii (strain ATCC 43067 / DSM 2661 / JAL-1 / JCM 10045 / NBRC 100440) (Methanococcus jannaschii).